The primary structure comprises 351 residues: Lipoyl synthase (351 aa).

A compositionally biased stretch (polar residues) spans 1–10 (MNDSGNSSKV). The tract at residues 1–27 (MNDSGNSSKVNVRPPSAGLGAPSPGKR) is disordered. Residues 14-24 (PPSAGLGAPSP) are compositionally biased toward low complexity. Cys74, Cys79, Cys85, Cys100, Cys104, Cys107, and Ser311 together coordinate [4Fe-4S] cluster. Residues 86-300 (WEDREATFLI…KEQAKEIGFS (215 aa)) enclose the Radical SAM core domain.

This sequence belongs to the radical SAM superfamily. Lipoyl synthase family. The cofactor is [4Fe-4S] cluster.

The protein localises to the cytoplasm. The catalysed reaction is [[Fe-S] cluster scaffold protein carrying a second [4Fe-4S](2+) cluster] + N(6)-octanoyl-L-lysyl-[protein] + 2 oxidized [2Fe-2S]-[ferredoxin] + 2 S-adenosyl-L-methionine + 4 H(+) = [[Fe-S] cluster scaffold protein] + N(6)-[(R)-dihydrolipoyl]-L-lysyl-[protein] + 4 Fe(3+) + 2 hydrogen sulfide + 2 5'-deoxyadenosine + 2 L-methionine + 2 reduced [2Fe-2S]-[ferredoxin]. Its pathway is protein modification; protein lipoylation via endogenous pathway; protein N(6)-(lipoyl)lysine from octanoyl-[acyl-carrier-protein]: step 2/2. Functionally, catalyzes the radical-mediated insertion of two sulfur atoms into the C-6 and C-8 positions of the octanoyl moiety bound to the lipoyl domains of lipoate-dependent enzymes, thereby converting the octanoylated domains into lipoylated derivatives. The polypeptide is Lipoyl synthase (Tropheryma whipplei (strain TW08/27) (Whipple's bacillus)).